Reading from the N-terminus, the 115-residue chain is Large ribosomal subunit protein P2 (115 aa).

Met-1 is subject to N-acetylmethionine. Ser-19 is subject to Phosphoserine. N6-acetyllysine; alternate is present on Lys-21. Lys-21 is subject to N6-succinyllysine; alternate. The segment covering 76-90 has biased composition (low complexity); it reads APGSAAPAAGSAPAA. The segment at 76–115 is disordered; it reads APGSAAPAAGSAPAAAEEKKDEKKEESEESDDDMGFGLFD. Phosphoserine occurs at positions 79 and 86. Residues 91-101 are compositionally biased toward basic and acidic residues; sequence AEEKKDEKKEE. Residues Ser-102 and Ser-105 each carry the phosphoserine modification.

It belongs to the eukaryotic ribosomal protein P1/P2 family. As to quaternary structure, heterodimer with RPLP1 at the lateral ribosomal stalk of the large ribosomal subunit.

Its function is as follows. Plays an important role in the elongation step of protein synthesis. The protein is Large ribosomal subunit protein P2 (Rplp2) of Rattus norvegicus (Rat).